We begin with the raw amino-acid sequence, 379 residues long: Homoserine O-succinyltransferase (379 aa).

Positions 48-357 (NAVLICHALS…SAHGHDAFLM (310 aa)) constitute an AB hydrolase-1 domain. Serine 154 functions as the Nucleophile in the catalytic mechanism. Substrate is bound at residue arginine 224. Residues aspartate 319 and histidine 352 contribute to the active site. Aspartate 353 is a binding site for substrate.

This sequence belongs to the AB hydrolase superfamily. MetX family. In terms of assembly, homodimer.

The protein resides in the cytoplasm. The enzyme catalyses L-homoserine + succinyl-CoA = O-succinyl-L-homoserine + CoA. Its pathway is amino-acid biosynthesis; L-methionine biosynthesis via de novo pathway; O-succinyl-L-homoserine from L-homoserine: step 1/1. In terms of biological role, transfers a succinyl group from succinyl-CoA to L-homoserine, forming succinyl-L-homoserine. This is Homoserine O-succinyltransferase from Neisseria gonorrhoeae (strain ATCC 700825 / FA 1090).